A 504-amino-acid chain; its full sequence is SPbeta prophage-derived uncharacterized protein YorI (504 aa).

This Bacillus subtilis (strain 168) protein is SPbeta prophage-derived uncharacterized protein YorI (yorI).